Consider the following 162-residue polypeptide: MFKFLVLTLGIISCQAYAEDTVIVNDHDISAIKDCWQKNSDDDTDVNVIKSCLRQEYNLVDAQLNKAYGEAYRYIEQVPRTGVKKPDTEQLNLLKKSQRAWLDFRDKECELILSNEDVQDLSDPYSESEWLSCMIIQTNTRTRQLQLYRNSEDFYPSPLTRG.

This sequence to R.meliloti R02472.

This is an uncharacterized protein from Escherichia coli (strain K12).